The chain runs to 489 residues: MIKITVKRFNGEKEYLESYEVPENITVLEALEYINKHYEANILFRASCRNAQCGSCAVTINGEPRLACETKVEDGMIIEPLRGFKVIRDLIVDREPYYKKLLGIKNYLIRKNYPEELEILIPKYVEENKELRGCIDCLSCLSVCPAREVSDYPGPTFMRQLARFAFDKRDEDGREITAYFENIYNCTTCAKCVEVCPKEIDIVHRAIEKLRALAFSKGYYIENHLKVRENVLKYNRSVVEEELPLLKQVADFYPAESEKLRVAFFTGCLVDFRLQNVGKDAIKVLNAHGVSVVIPKNQVCCGSPFFRTGQRDVAEMLKRKNLEIFNKLDVDCVVTICAGCGSTLKNDYKERKFEVKDITEVLTEVGLLKYKPLKMRITYHDPCHLRRGQKIYKQPREILKSIPELEFIDIEARCCGAGGGVRSGKPDIANLIGKSRARMIYDANVDAVITVCPFCEYHIRDSLKRFKEENKIDKEIDVMNIVSLLAKVI.

In terms of domain architecture, 2Fe-2S ferredoxin-type spans 2 to 84 (IKITVKRFNG…GMIIEPLRGF (83 aa)). The [2Fe-2S] cluster site is built by Cys48, Cys53, Cys56, and Cys68. 4Fe-4S ferredoxin-type domains lie at 123–155 (KYVEENKELRGCIDCLSCLSVCPAREVSDYPGP) and 177–205 (TAYFENIYNCTTCAKCVEVCPKEIDIVHR). [4Fe-4S] cluster is bound by residues Cys134, Cys137, Cys140, Cys144, Cys186, Cys189, Cys192, and Cys196.

This sequence belongs to the succinate dehydrogenase/fumarate reductase iron-sulfur protein family.

This is an uncharacterized protein from Methanocaldococcus jannaschii (strain ATCC 43067 / DSM 2661 / JAL-1 / JCM 10045 / NBRC 100440) (Methanococcus jannaschii).